A 924-amino-acid polypeptide reads, in one-letter code: DNA polymerase (924 aa).

The 3'-5' exonuclease domain maps to 235–386 (YPMSQQPKIV…DDCDVTFRLS (152 aa)).

Belongs to the DNA polymerase type-A family.

The catalysed reaction is DNA(n) + a 2'-deoxyribonucleoside 5'-triphosphate = DNA(n+1) + diphosphate. Replicates viral genomic DNA. This polymerase possesses two enzymatic activities: DNA synthesis (polymerase) and an exonucleolytic activity that degrades single-stranded DNA in the 3'-5' direction. The protein is DNA polymerase (31) of Bacillus phage SP01 (Bacteriophage SP01).